We begin with the raw amino-acid sequence, 417 residues long: Serine hydroxymethyltransferase 2 (417 aa).

Residues leucine 121 and 125 to 127 (GHL) contribute to the (6S)-5,6,7,8-tetrahydrofolate site. An N6-(pyridoxal phosphate)lysine modification is found at lysine 229. Residue 354-356 (SPF) coordinates (6S)-5,6,7,8-tetrahydrofolate.

The protein belongs to the SHMT family. Homodimer. Pyridoxal 5'-phosphate serves as cofactor.

It is found in the cytoplasm. It carries out the reaction (6R)-5,10-methylene-5,6,7,8-tetrahydrofolate + glycine + H2O = (6S)-5,6,7,8-tetrahydrofolate + L-serine. It participates in one-carbon metabolism; tetrahydrofolate interconversion. Its pathway is amino-acid biosynthesis; glycine biosynthesis; glycine from L-serine: step 1/1. Functionally, catalyzes the reversible interconversion of serine and glycine with tetrahydrofolate (THF) serving as the one-carbon carrier. This reaction serves as the major source of one-carbon groups required for the biosynthesis of purines, thymidylate, methionine, and other important biomolecules. Also exhibits THF-independent aldolase activity toward beta-hydroxyamino acids, producing glycine and aldehydes, via a retro-aldol mechanism. The protein is Serine hydroxymethyltransferase 2 of Pseudomonas fluorescens (strain Pf0-1).